The chain runs to 336 residues: Glucokinase (336 aa).

12 to 17 (ADIGGT) serves as a coordination point for ATP.

Belongs to the bacterial glucokinase family.

The protein localises to the cytoplasm. The enzyme catalyses D-glucose + ATP = D-glucose 6-phosphate + ADP + H(+). The protein is Glucokinase of Helicobacter acinonychis (strain Sheeba).